Here is a 571-residue protein sequence, read N- to C-terminus: Sulfite reductase [NADPH] hemoprotein beta-component (571 aa).

[4Fe-4S] cluster is bound by residues Cys-436, Cys-442, Cys-481, and Cys-485. Siroheme is bound at residue Cys-485.

Belongs to the nitrite and sulfite reductase 4Fe-4S domain family. Alpha(8)-beta(8). The alpha component is a flavoprotein, the beta component is a hemoprotein. It depends on siroheme as a cofactor. [4Fe-4S] cluster is required as a cofactor.

It catalyses the reaction hydrogen sulfide + 3 NADP(+) + 3 H2O = sulfite + 3 NADPH + 4 H(+). It functions in the pathway sulfur metabolism; hydrogen sulfide biosynthesis; hydrogen sulfide from sulfite (NADPH route): step 1/1. Its function is as follows. Component of the sulfite reductase complex that catalyzes the 6-electron reduction of sulfite to sulfide. This is one of several activities required for the biosynthesis of L-cysteine from sulfate. The sequence is that of Sulfite reductase [NADPH] hemoprotein beta-component (cysI) from Bacillus subtilis (strain 168).